Consider the following 566-residue polypeptide: Intracellular exo-alpha-(1-&gt;5)-L-arabinofuranosidase (566 aa).

Residues 1–12 (MTTHNSQYSAET) show a composition bias toward polar residues. Residues 1 to 39 (MTTHNSQYSAETTHPDKQESSPAPTAAGTTASNVSTTGN) form a disordered region. Low complexity predominate over residues 20-32 (SSPAPTAAGTTAS). Alpha-L-arabinofuranose-binding residues include E69, N114, and N214. Catalysis depends on E215, which acts as the Proton donor/acceptor. Positions 286, 340, and 409 each coordinate alpha-L-arabinofuranose. Residue E340 is the Nucleophile of the active site.

The protein belongs to the glycosyl hydrolase 51 family. In terms of assembly, homohexamer; trimer of dimers.

It localises to the cytoplasm. It catalyses the reaction Hydrolysis of terminal non-reducing alpha-L-arabinofuranoside residues in alpha-L-arabinosides.. Its pathway is glycan metabolism; L-arabinan degradation. With respect to regulation, completely inhibited by Hg(2+) and Cu(2+) ions, whereas 1 mM Zn(2+) inhibited activity by 51%. Involved in the degradation of arabinan and is a key enzyme in the complete degradation of the plant cell wall. Catalyzes the cleavage of terminal alpha-(1-&gt;5)-arabinofuranosyl bonds in different hemicellulosic homopolysaccharides (branched and debranched arabinans). It is active with sugar beet arabinan and wheat arabinoxylan. It also exhibited activity against alpha-(1-&gt;5)-linked arabinobiose, arabinotriose, arabinotetraose, and arabinopentaose. The chain is Intracellular exo-alpha-(1-&gt;5)-L-arabinofuranosidase (abfB) from Bifidobacterium longum.